A 431-amino-acid chain; its full sequence is Keratin, type I cytoskeletal 40 (431 aa).

Residues 1–89 form a head region; the sequence is MASEGSPDCC…CEEGTFNSNE (89 aa). An IF rod domain is found at 89 to 400; it reads EKETMQFLND…GLLEKEDSRL (312 aa). Positions 90 to 124 are coil 1A; it reads KETMQFLNDRLASYLERVRSLEENNAELECRIREQ. The linker 1 stretch occupies residues 125 to 135; sequence CEPDATPVCPD. The interval 136-236 is coil 1B; that stretch reads YQRYFDTIEE…HEEEVNLLRE (101 aa). A linker 12 region spans residues 237 to 252; that stretch reads QLGDRLNVELDTAPTV. Positions 253 to 396 are coil 2; that stretch reads DLNKVLDEMR…NTYRGLLEKE (144 aa). Residues 397–431 form a tail region; it reads DSRLPCNPGSTASISNSACEPCSAYVICTVENCCA.

This sequence belongs to the intermediate filament family. Heterotetramer of two type I and two type II keratins.

May play a role in late hair differentiation. The polypeptide is Keratin, type I cytoskeletal 40 (Krt40) (Rattus norvegicus (Rat)).